The sequence spans 219 residues: Octanoyltransferase (219 aa).

Positions 31 to 219 (EDLPGFLVFC…KLKRRLLEVL (189 aa)) constitute a BPL/LPL catalytic domain. Substrate contacts are provided by residues 69-76 (RGGRATYH), 153-155 (SVG), and 166-168 (GAA). Catalysis depends on Cys184, which acts as the Acyl-thioester intermediate.

This sequence belongs to the LipB family.

The protein localises to the cytoplasm. The catalysed reaction is octanoyl-[ACP] + L-lysyl-[protein] = N(6)-octanoyl-L-lysyl-[protein] + holo-[ACP] + H(+). The protein operates within protein modification; protein lipoylation via endogenous pathway; protein N(6)-(lipoyl)lysine from octanoyl-[acyl-carrier-protein]: step 1/2. Functionally, catalyzes the transfer of endogenously produced octanoic acid from octanoyl-acyl-carrier-protein onto the lipoyl domains of lipoate-dependent enzymes. Lipoyl-ACP can also act as a substrate although octanoyl-ACP is likely to be the physiological substrate. The polypeptide is Octanoyltransferase (Bdellovibrio bacteriovorus (strain ATCC 15356 / DSM 50701 / NCIMB 9529 / HD100)).